A 319-amino-acid chain; its full sequence is Ankyrin repeat domain-containing protein 1 (319 aa).

A coiled-coil region spans residues 55–89 (LGEEQRKSEKVREAELKKKKLEQRSKLENLEDLEI). ANK repeat units lie at residues 152-181 (YKRT…QIEF), 185-214 (LEST…KISA), 218-247 (LLST…DLNA), 251-280 (EGDT…DLNV), and 284-315 (AGKT…KNSR).

Interacts with TTN/titin. Interacts with YBX1. As to expression, expressed in heart, cardiac muscle.

The protein localises to the nucleus. Its function is as follows. May play an important role in endothelial cell activation. May act as a nuclear transcription factor that negatively regulates the expression of cardiac genes. The polypeptide is Ankyrin repeat domain-containing protein 1 (Ankrd1) (Rattus norvegicus (Rat)).